Reading from the N-terminus, the 247-residue chain is Reticulon-like protein B8 (247 aa).

Residues 61–247 (SADVLLWRNK…SGKFGLKKRE (187 aa)) form the Reticulon domain. The next 3 helical transmembrane spans lie at 71–91 (KISA…EWIN), 92–112 (FHFL…QFVW), and 166–186 (FLMA…CNFL).

It is found in the endoplasmic reticulum membrane. The chain is Reticulon-like protein B8 (RTNLB8) from Arabidopsis thaliana (Mouse-ear cress).